The primary structure comprises 417 residues: Alpha-ionylideneethane synthase aba3 (417 aa).

It belongs to the alpha-ionylideneethane synthase family.

It functions in the pathway hormone biosynthesis. Alpha-ionylideneethane synthase; part of the gene cluster that mediates the biosynthesis of abscisic acid (ABA), a phytohormone that acts antagonistically toward salicylic acid (SA), jasmonic acid (JA) and ethylene (ETH) signaling, to impede plant defense responses. The first step of the pathway catalyzes the reaction from farnesyl diphosphate to alpha-ionylideneethane performed by the alpha-ionylideneethane synthase aba3 via a three-step reaction mechanism involving 2 neutral intermediates, beta-farnesene and allofarnesene. The cytochrome P450 monooxygenase aba1 might then be involved in the conversion of alpha-ionylideneethane to alpha-ionylideneacetic acid. Alpha-ionylideneacetic acid is further converted to abscisic acid in 2 steps involving the cytochrome P450 monooxygenase aba2 and the short-chain dehydrogenase/reductase aba4, via the intermediates 1'-deoxy-ABA or 1',4'-trans-diol-ABA, depending on the order of action of these 2 enzymes. Aba2 is responsible for the hydroxylation of carbon atom C-1' and aba4 might be involved in the oxidation of the C-4' carbon atom. This Botryotinia fuckeliana (Noble rot fungus) protein is Alpha-ionylideneethane synthase aba3.